A 793-amino-acid polypeptide reads, in one-letter code: MASKTKASEALKVVARCRPLSRKEEAAGHEQILTMDVKLGQVTLRNPRAAPGELPKTFTFDAVYDASSKQADLYDETVRPLIDSVLQGFNGTVFAYGQTGTGKTYTMQGTWVEPELRGVIPNAFEHIFTHISRSQNQQYLVRASYLEIYQEEIRDLLSKEPGKRLELKENPETGVYIKDLSSFVTKNVKEIEHVMNLGNQTRAVGSTHMNEVSSRSHAIFIITVECSERGSDGQDHIRVGKLNLVDLAGSERQNKAGPNTAGGASTPSSGGSGGGGGSGGGAGGERPKEASKINLSLSALGNVIAALAGNRSTHIPYRDSKLTRLLQDSLGGNAKTIMVATLGPASHSYDESLSTLRFANRAKNIKNKPRVNEDPKDTLLREFQEEIARLKAQLEKRGMLGKRPRRKSSRGKKAVSAPPGYPESPVIEAWVAEEEDDNNNNHRPPQPILESALEKNMENYLQEQKERLEEEKAAIQDDRSLVSEEKQKLLEEKEKMLEKDLRREQQATELLAAKYKAMESKLLIGGRNIMDHTNEQQKMLELKRQEIAEQKRREREMQQEMMLRDEETMELRGTYTSLQQEVEVKTKKLKKLYAKLQAVKAEIQDQHDEYIRVRQDLEEAQNEQTRELKLKYLIIENFIPPEEKNKIMNRLFLDCEEEQWKFQPLVPAGVNSQMKKRPTSAVGYKRPISQYARVAMAMGSHPRYRAENIMFLELDVSPPAVFEMEFSHDQEQDPRALHMERLMRLDSFLERLSTSKVRKSRSWCQSPQRPPPSTTHASLASASLRPATVADHE.

The Kinesin motor domain maps to 10 to 365 (ALKVVARCRP…LRFANRAKNI (356 aa)). 97 to 104 (GQTGTGKT) provides a ligand contact to ATP. Disordered regions lie at residues 251–288 (ERQN…ERPK), 395–423 (EKRG…GYPE), and 756–793 (KVRK…ADHE). The span at 270-284 (GGSGGGGGSGGGAGG) shows a compositional bias: gly residues. Positions 376 to 630 (KDTLLREFQE…QNEQTRELKL (255 aa)) form a coiled coil. The span at 399-413 (MLGKRPRRKSSRGKK) shows a compositional bias: basic residues. Residues 631 to 793 (KYLIIENFIP…LRPATVADHE (163 aa)) are globular.

The protein belongs to the TRAFAC class myosin-kinesin ATPase superfamily. Kinesin family. Kinesin II subfamily. As to quaternary structure, heterodimer of KIF3A and KIF3C.

It localises to the cytoplasm. The protein localises to the cytoskeleton. Its function is as follows. Microtubule-based anterograde translocator for membranous organelles. In Pongo abelii (Sumatran orangutan), this protein is Kinesin-like protein KIF3C (KIF3C).